The following is a 361-amino-acid chain: Phosphoserine aminotransferase (361 aa).

Serine 9 and arginine 42 together coordinate L-glutamate. Residues alanine 76–arginine 77, tryptophan 102, threonine 153, aspartate 173, and glutamine 196 each bind pyridoxal 5'-phosphate. Position 197 is an N6-(pyridoxal phosphate)lysine (lysine 197). Pyridoxal 5'-phosphate is bound at residue asparagine 238–threonine 239.

This sequence belongs to the class-V pyridoxal-phosphate-dependent aminotransferase family. SerC subfamily. Homodimer. Requires pyridoxal 5'-phosphate as cofactor.

The protein localises to the cytoplasm. It catalyses the reaction O-phospho-L-serine + 2-oxoglutarate = 3-phosphooxypyruvate + L-glutamate. The enzyme catalyses 4-(phosphooxy)-L-threonine + 2-oxoglutarate = (R)-3-hydroxy-2-oxo-4-phosphooxybutanoate + L-glutamate. It participates in amino-acid biosynthesis; L-serine biosynthesis; L-serine from 3-phospho-D-glycerate: step 2/3. It functions in the pathway cofactor biosynthesis; pyridoxine 5'-phosphate biosynthesis; pyridoxine 5'-phosphate from D-erythrose 4-phosphate: step 3/5. Its function is as follows. Catalyzes the reversible conversion of 3-phosphohydroxypyruvate to phosphoserine and of 3-hydroxy-2-oxo-4-phosphonooxybutanoate to phosphohydroxythreonine. In Serratia proteamaculans (strain 568), this protein is Phosphoserine aminotransferase.